A 205-amino-acid polypeptide reads, in one-letter code: uncharacterized protein (205 aa).

The first 19 residues, 1–19 (MKTLCVLSIFLALLGGLCT), serve as a signal peptide directing secretion. Low complexity predominate over residues 40-133 (VSSVASTSTP…PKTSKNNPKT (94 aa)). The disordered stretch occupies residues 40 to 135 (VSSVASTSTP…TSKNNPKTQE (96 aa)). A helical membrane pass occupies residues 147–167 (GILYLFILLLIIFVIILICFI).

The protein resides in the host membrane. This is an uncharacterized protein from Equine herpesvirus 2 (strain 86/87) (EHV-2).